The primary structure comprises 833 residues: Neuronal tyrosine-phosphorylated phosphoinositide-3-kinase adapter 1 (833 aa).

5 disordered regions span residues 1–45, 64–191, 219–423, 645–674, and 736–765; these read MNLL…PGVR, PASQ…LQRL, VFRG…RELP, EEDGARAWNGSTEGPGKVEHEDRGPVPSGI, and HTPRPCSQPRDALSQTHPVLPLPLPPQPAR. Residues 8-25 are compositionally biased toward basic and acidic residues; that stretch reads TKLEWRQHKEEEAKRSSS. Residues 76–181 form an involved in CYFIP1- and NCKAP1-binding region; the sequence is STMAPRSLSC…DESCAPAPSP (106 aa). The span at 111–120 shows a compositional bias: basic residues; that stretch reads PPAKPRRHPS. Over residues 162–171 the composition is skewed to polar residues; that stretch reads SPNTQLSVSF. A compositionally biased stretch (gly residues) spans 220 to 239; the sequence is FRGGGRSGGGLAGPPLGSGG. A compositionally biased stretch (acidic residues) spans 248–257; sequence SDSEDSEAIY. Positions 275–285 are enriched in pro residues; that stretch reads GPPPLTAPSPP.

This sequence belongs to the NYAP family. As to quaternary structure, interacts with ACOT9, ARHGAP26 and PIK3R2. Interacts with components of the WAVE1 complex, CYFIP1 and NCKAP1; this interaction mediates PI3K-WAVE1 association and actin cytoskeleton remodeling. In terms of processing, phosphorylated on tyrosine residues by FYN upon stimulation with CNTN5. Phosphorylation begins at 14 dpc, reaches a peak during perinatal days in brain, then gradually decreases. In terms of tissue distribution, expressed predominantly in brain where it is present in the neurons, but not in astrocytes or oligodendrites.

Functionally, activates PI3K and concomitantly recruits the WAVE1 complex to the close vicinity of PI3K and regulates neuronal morphogenesis. The protein is Neuronal tyrosine-phosphorylated phosphoinositide-3-kinase adapter 1 (Nyap1) of Mus musculus (Mouse).